Consider the following 59-residue polypeptide: UPF0434 protein PBPRA2383 (59 aa).

This sequence belongs to the UPF0434 family.

The chain is UPF0434 protein PBPRA2383 from Photobacterium profundum (strain SS9).